The primary structure comprises 146 residues: D-aminoacyl-tRNA deacylase (146 aa).

Residues glycine 138–proline 139 carry the Gly-cisPro motif, important for rejection of L-amino acids motif.

Belongs to the DTD family. Homodimer.

Its subcellular location is the cytoplasm. The catalysed reaction is glycyl-tRNA(Ala) + H2O = tRNA(Ala) + glycine + H(+). It catalyses the reaction a D-aminoacyl-tRNA + H2O = a tRNA + a D-alpha-amino acid + H(+). Functionally, an aminoacyl-tRNA editing enzyme that deacylates mischarged D-aminoacyl-tRNAs. Also deacylates mischarged glycyl-tRNA(Ala), protecting cells against glycine mischarging by AlaRS. Acts via tRNA-based rather than protein-based catalysis; rejects L-amino acids rather than detecting D-amino acids in the active site. By recycling D-aminoacyl-tRNA to D-amino acids and free tRNA molecules, this enzyme counteracts the toxicity associated with the formation of D-aminoacyl-tRNA entities in vivo and helps enforce protein L-homochirality. The chain is D-aminoacyl-tRNA deacylase from Xanthomonas campestris pv. campestris (strain 8004).